The sequence spans 58 residues: Sperm protamine P2 (58 aa).

The tract at residues 1–58 is disordered; sequence RRRRRRGKGRGKKRKGKGKKRGKGRRRGSKGRKKKKGKGKKRKRRRRRRRKGSKGKGK.

In terms of tissue distribution, gonads.

It is found in the nucleus. Its subcellular location is the chromosome. Its function is as follows. Protamines substitute for histones in the chromatin of sperm during the haploid phase of spermatogenesis. They compact sperm DNA into a highly condensed, stable and inactive complex. The protein is Sperm protamine P2 of Bolinus brandaris (Purple dye murex).